The primary structure comprises 237 residues: UPF0053 inner membrane protein YgdQ (237 aa).

Residues 1 to 17 lie on the Periplasmic side of the membrane; that stretch reads MLFAWITDPNAWLALGT. Residues 18-38 traverse the membrane as a helical segment; the sequence is LTLLEIVLGIDNIIFLSLVVA. Residues 39 to 50 lie on the Cytoplasmic side of the membrane; it reads KLPTAQRAHARR. A helical transmembrane segment spans residues 51 to 71; the sequence is LGLAGAMVMRLALLASIAWVT. The Periplasmic portion of the chain corresponds to 72 to 79; sequence RLTNPLFT. Residues 80-100 form a helical membrane-spanning segment; that stretch reads IFSQEISARDLILLLGGLFLI. The Cytoplasmic portion of the chain corresponds to 101 to 124; that stretch reads WKASKEIHESIEGEEEGLKTRVSS. The chain crosses the membrane as a helical span at residues 125-145; sequence FLGAIVQIMLLDIIFSLDSVI. The Periplasmic portion of the chain corresponds to 146 to 151; it reads TAVGLS. A helical transmembrane segment spans residues 152-172; it reads DHLFIMMAAVVIAVGVMMFAA. Topologically, residues 173-186 are cytoplasmic; the sequence is RSIGDFVERHPSVK. A helical transmembrane segment spans residues 187–207; that stretch reads MLALSFLILVGFTLILESFDI. Topologically, residues 208–209 are periplasmic; that stretch reads HV. A helical membrane pass occupies residues 210-230; the sequence is PKGYIYFAMFFSIAVESLNLI. The Cytoplasmic portion of the chain corresponds to 231–237; the sequence is RNKKNPL.

This sequence belongs to the UPF0053 family.

The protein resides in the cell inner membrane. The polypeptide is UPF0053 inner membrane protein YgdQ (ygdQ) (Escherichia coli O157:H7).